The sequence spans 511 residues: Ribose import ATP-binding protein RbsA (511 aa).

ABC transporter domains are found at residues 9–245 (FEAK…VGRD) and 261–506 (LRAE…LPRR). Position 41–48 (41–48 (GENGAGKS)) interacts with ATP.

The protein belongs to the ABC transporter superfamily. Ribose importer (TC 3.A.1.2.1) family. In terms of assembly, the complex is composed of an ATP-binding protein (RbsA), two transmembrane proteins (RbsC) and a solute-binding protein (RbsB).

The protein localises to the cell inner membrane. It catalyses the reaction D-ribose(out) + ATP + H2O = D-ribose(in) + ADP + phosphate + H(+). Functionally, part of the ABC transporter complex RbsABC involved in ribose import. Responsible for energy coupling to the transport system. The polypeptide is Ribose import ATP-binding protein RbsA (Rhodopirellula baltica (strain DSM 10527 / NCIMB 13988 / SH1)).